Consider the following 108-residue polypeptide: E3 ubiquitin-protein ligase Midline-1 (108 aa).

The region spanning 1 to 100 is the B30.2/SPRY domain; that stretch reads KSAPKHEWIG…IITGLPIPDH (100 aa).

The protein belongs to the TRIM/RBCC family. As to quaternary structure, homodimer or heterodimer with MID2. Interacts with IGBP1.

It localises to the cytoplasm. The protein localises to the cytoskeleton. The catalysed reaction is S-ubiquitinyl-[E2 ubiquitin-conjugating enzyme]-L-cysteine + [acceptor protein]-L-lysine = [E2 ubiquitin-conjugating enzyme]-L-cysteine + N(6)-ubiquitinyl-[acceptor protein]-L-lysine.. Its function is as follows. Has E3 ubiquitin ligase activity towards IGBP1, promoting its monoubiquitination, which results in deprotection of the catalytic subunit of protein phosphatase PP2A, and its subsequent degradation by polyubiquitination. This chain is E3 ubiquitin-protein ligase Midline-1 (Mid1), found in Mus caroli (Ryukyu mouse).